A 125-amino-acid chain; its full sequence is Small ribosomal subunit protein uS17 (125 aa).

Disordered regions lie at residues 1–21 and 101–125; these read MSSSPAQRHTRKTQIGFVSSR and VAAQVPTKTTASNTPAPAEQPAPQA.

Belongs to the universal ribosomal protein uS17 family. As to quaternary structure, part of the 30S ribosomal subunit.

Functionally, one of the primary rRNA binding proteins, it binds specifically to the 5'-end of 16S ribosomal RNA. The polypeptide is Small ribosomal subunit protein uS17 (Opitutus terrae (strain DSM 11246 / JCM 15787 / PB90-1)).